The sequence spans 454 residues: CBL-interacting protein kinase 4 (454 aa).

The region spanning 25-284 (YELGRMLGRG…ESLAAHHPWF (260 aa)) is the Protein kinase domain. ATP contacts are provided by residues 31–39 (LGRGTFAKV) and Lys-54. Asp-151 functions as the Proton acceptor in the catalytic mechanism. Positions 169–198 (DFGLAALPDTLRDDGRLHTACGTPAYAAPE) are activation loop. One can recognise an NAF domain in the interval 311–335 (APPPPLNAFDIISMSPGLDLSGLFG). The interval 341-370 (LREKRFTTTASPEKTLEQLGLAGGKLGYVV) is PPI.

It belongs to the protein kinase superfamily. CAMK Ser/Thr protein kinase family. SNF1 subfamily. It depends on Mn(2+) as a cofactor.

It carries out the reaction L-seryl-[protein] + ATP = O-phospho-L-seryl-[protein] + ADP + H(+). The enzyme catalyses L-threonyl-[protein] + ATP = O-phospho-L-threonyl-[protein] + ADP + H(+). CIPK serine-threonine protein kinases interact with CBL proteins. Binding of a CBL protein to the regulatory NAF domain of CIPK protein lead to the activation of the kinase in a calcium-dependent manner. This Oryza sativa subsp. japonica (Rice) protein is CBL-interacting protein kinase 4 (CIPK4).